Reading from the N-terminus, the 469-residue chain is Sulfate adenylyltransferase subunit 1 (469 aa).

A tr-type G domain is found at 22-237 (KEVLRFITCG…LEEVPVKSEE (216 aa)). The G1 stretch occupies residues 31–38 (GSVDDGKS). Position 31–38 (31–38 (GSVDDGKS)) interacts with GTP. Positions 89–93 (GITID) are G2. Residues 110–113 (DTPG) form a G3 region. Residues 110-114 (DTPGH) and 165-168 (NKMD) contribute to the GTP site. Positions 165-168 (NKMD) are G4. The segment at 202–204 (SAK) is G5.

It belongs to the TRAFAC class translation factor GTPase superfamily. Classic translation factor GTPase family. CysN/NodQ subfamily. Heterodimer composed of CysD, the smaller subunit, and CysN.

It catalyses the reaction sulfate + ATP + H(+) = adenosine 5'-phosphosulfate + diphosphate. It participates in sulfur metabolism; hydrogen sulfide biosynthesis; sulfite from sulfate: step 1/3. Functionally, with CysD forms the ATP sulfurylase (ATPS) that catalyzes the adenylation of sulfate producing adenosine 5'-phosphosulfate (APS) and diphosphate, the first enzymatic step in sulfur assimilation pathway. APS synthesis involves the formation of a high-energy phosphoric-sulfuric acid anhydride bond driven by GTP hydrolysis by CysN coupled to ATP hydrolysis by CysD. The chain is Sulfate adenylyltransferase subunit 1 from Methylorubrum extorquens (strain CM4 / NCIMB 13688) (Methylobacterium extorquens).